A 94-amino-acid chain; its full sequence is Cytochrome b-c1 complex subunit 8, mitochondrial (94 aa).

At Gly2–Phe49 the chain is on the mitochondrial matrix side. Residues Arg50–Leu80 traverse the membrane as a helical segment. Topologically, residues Tyr81 to Val94 are mitochondrial intermembrane.

It belongs to the UQCRQ/QCR8 family. In terms of assembly, component of the ubiquinol-cytochrome c oxidoreductase (cytochrome b-c1 complex, complex III, CIII), a multisubunit enzyme composed of 10 subunits. The complex is composed of 3 respiratory subunits cytochrome b (COB), cytochrome c1 (CYT1) and Rieske protein (RIP1), 2 core protein subunits COR1 and QCR2, and 5 low-molecular weight protein subunits QCR6, QCR7, QCR8, QCR9 and QCR10. The complex exists as an obligatory dimer and forms supercomplexes (SCs) in the inner mitochondrial membrane with a monomer or a dimer of cytochrome c oxidase (complex IV, CIV), resulting in 2 different assemblies (supercomplexes III(2)IV and III(2)IV(2)).

Its subcellular location is the mitochondrion inner membrane. Its function is as follows. Component of the ubiquinol-cytochrome c oxidoreductase, a multisubunit transmembrane complex that is part of the mitochondrial electron transport chain which drives oxidative phosphorylation. The respiratory chain contains 3 multisubunit complexes succinate dehydrogenase (complex II, CII), ubiquinol-cytochrome c oxidoreductase (cytochrome b-c1 complex, complex III, CIII) and cytochrome c oxidase (complex IV, CIV), that cooperate to transfer electrons derived from NADH and succinate to molecular oxygen, creating an electrochemical gradient over the inner membrane that drives transmembrane transport and the ATP synthase. The cytochrome b-c1 complex catalyzes electron transfer from ubiquinol to cytochrome c, linking this redox reaction to translocation of protons across the mitochondrial inner membrane, with protons being carried across the membrane as hydrogens on the quinol. In the process called Q cycle, 2 protons are consumed from the matrix, 4 protons are released into the intermembrane space and 2 electrons are passed to cytochrome c. This chain is Cytochrome b-c1 complex subunit 8, mitochondrial (QCR8), found in Saccharomyces cerevisiae (strain ATCC 204508 / S288c) (Baker's yeast).